The chain runs to 552 residues: MPAPQPFLPLLFVFVLIHLTSETNLLPDPGSHPGMCPNELSPHLWVDAQSTCERECTGDQDCAASEKCCTNVCGLQSCVAARFPSGGPAVPETAASCEGFQCPQQGSDCDIWDGQPVCRCRDRCEKEPSFTCASDGLTYYNRCYMDAEACLRGLHLHVVPCKHILSWPPSSPGPPETTARPTPGAAPMPPALYNSPSPQAVHVGGTASLHCDVSGRPPPAVTWEKQSHQRENLIMRPDQMYGNVVVTSIGQLVLYNAQLEDAGLYTCTARNAAGLLRADFPLSVLQRATTQDRDPGIPALAECQADTQACVGPPTPHHVLWRFDPQRGSCMTFPALRCDGAARGFETYEACQQACVRGPGDVCALPAVQGPCQGWEPRWAYSPLLQQCHPFVYSGCEGNSNNFETRESCEDACPVPRTPPCRACRLKSKLALSLCRSDFAIVGRLTEVLEEPEAAGGIARVALDDVLKDDKMGLKFLGTKYLEVTLSGMDWACPCPNVTAVDGPLVIMGEVREGVAVLDANSYVRAASEKRVKKIVELLEKKACELLNRFQD.

An N-terminal signal peptide occupies residues 1-25; it reads MPAPQPFLPLLFVFVLIHLTSETNL. One can recognise a WAP domain in the interval 29-82; that stretch reads PGSHPGMCPNELSPHLWVDAQSTCERECTGDQDCAASEKCCTNVCGLQSCVAAR. Disulfide bonds link cysteine 36/cysteine 69, cysteine 52/cysteine 73, cysteine 56/cysteine 68, cysteine 62/cysteine 78, cysteine 120/cysteine 150, cysteine 124/cysteine 143, cysteine 132/cysteine 161, cysteine 211/cysteine 267, cysteine 303/cysteine 355, cysteine 310/cysteine 338, cysteine 330/cysteine 351, cysteine 363/cysteine 413, cysteine 372/cysteine 396, cysteine 388/cysteine 409, cysteine 421/cysteine 493, cysteine 424/cysteine 495, and cysteine 435/cysteine 544. In terms of domain architecture, Kazal-like spans 112 to 163; that stretch reads WDGQPVCRCRDRCEKEPSFTCASDGLTYYNRCYMDAEACLRGLHLHVVPCKH. The region spanning 190 to 283 is the Ig-like C2-type domain; it reads PALYNSPSPQ…GLLRADFPLS (94 aa). 2 BPTI/Kunitz inhibitor domains span residues 289 to 355 and 363 to 413; these read TTQD…QQAC and CALP…EDAC. Positions 413–544 constitute an NTR domain; the sequence is CPVPRTPPCR…IVELLEKKAC (132 aa). A glycan (N-linked (GlcNAc...) asparagine) is linked at asparagine 497.

Belongs to the WFIKKN family.

The protein localises to the secreted. Its function is as follows. Protease-inhibitor that contains multiple distinct protease inhibitor domains. Probably has serine protease- and metalloprotease-inhibitor activity. In Mus musculus (Mouse), this protein is WAP, Kazal, immunoglobulin, Kunitz and NTR domain-containing protein 1 (Wfikkn1).